A 407-amino-acid chain; its full sequence is Tryptophan synthase beta chain (407 aa).

Position 98 is an N6-(pyridoxal phosphate)lysine (Lys98).

It belongs to the TrpB family. Tetramer of two alpha and two beta chains. Pyridoxal 5'-phosphate serves as cofactor.

The enzyme catalyses (1S,2R)-1-C-(indol-3-yl)glycerol 3-phosphate + L-serine = D-glyceraldehyde 3-phosphate + L-tryptophan + H2O. Its pathway is amino-acid biosynthesis; L-tryptophan biosynthesis; L-tryptophan from chorismate: step 5/5. In terms of biological role, the beta subunit is responsible for the synthesis of L-tryptophan from indole and L-serine. In Bradyrhizobium sp. (strain BTAi1 / ATCC BAA-1182), this protein is Tryptophan synthase beta chain.